We begin with the raw amino-acid sequence, 346 residues long: tRNA N6-adenosine threonylcarbamoyltransferase (346 aa).

Residues His110 and His114 each contribute to the Fe cation site. Substrate is bound by residues 132–136 (LLSGG), Asp165, Gly178, and Asn274. Position 298 (Asp298) interacts with Fe cation.

This sequence belongs to the KAE1 / TsaD family. The cofactor is Fe(2+).

Its subcellular location is the cytoplasm. The catalysed reaction is L-threonylcarbamoyladenylate + adenosine(37) in tRNA = N(6)-L-threonylcarbamoyladenosine(37) in tRNA + AMP + H(+). Its function is as follows. Required for the formation of a threonylcarbamoyl group on adenosine at position 37 (t(6)A37) in tRNAs that read codons beginning with adenine. Is involved in the transfer of the threonylcarbamoyl moiety of threonylcarbamoyl-AMP (TC-AMP) to the N6 group of A37, together with TsaE and TsaB. TsaD likely plays a direct catalytic role in this reaction. In Borreliella afzelii (strain PKo) (Borrelia afzelii), this protein is tRNA N6-adenosine threonylcarbamoyltransferase.